A 634-amino-acid chain; its full sequence is Sodium-dependent neutral amino acid transporter B(0)AT1 (634 aa).

At 1-41 (MVRLVLPNPGLEERIPSLDELEVIEKEEAGSRPKWDNKAQY) the chain is on the cytoplasmic side. Residue S17 is modified to Phosphoserine. Residues 42 to 62 (MLTCVGFCVGLGNVWRFPYLC) traverse the membrane as a helical segment. The Extracellular segment spans residues 63–67 (QSHGG). A helical transmembrane segment spans residues 68–88 (GAFMIPFLILLVFEGIPLLYL). The Cytoplasmic portion of the chain corresponds to 89–119 (EFAIGQRLRKGSMGVWSSIHPALKGIGIASM). Residues 120–140 (FVSFMVGLYYNTIIAWVMWYF) form a helical membrane-spanning segment. At 141 to 192 (FNSFQEPLPWSECPLNQNQTGYVEECAKSSSVDYFWYRETLNISTSISDSGS) the chain is on the extracellular side. N158 and N182 each carry an N-linked (GlcNAc...) asparagine glycan. A helical transmembrane segment spans residues 193–213 (IQWWILLCLTCAWSVLYVCII). The Cytoplasmic segment spans residues 214-221 (RGIETTGK). Residues 222–242 (AVYITSTLPYVVLTIFLIRGL) form a helical membrane-spanning segment. Residues 243–268 (TLKGATNGIVFLFTPNITELSNPNTW) are Extracellular-facing. N258 is a glycosylation site (N-linked (GlcNAc...) asparagine). Residues 269–289 (LDAGAQVFYSFSLAFGGLISF) traverse the membrane as a helical segment. The Cytoplasmic portion of the chain corresponds to 290–304 (SSYNSVHNNCEMDSV). The chain crosses the membrane as a helical span at residues 305 to 325 (IVSVINGFTSVYAATVVYSII). The Extracellular portion of the chain corresponds to 326-413 (GFRATERFDD…TEAITKMPVS (88 aa)). N354 and N368 each carry an N-linked (GlcNAc...) asparagine glycan. Residues 414–434 (PLWSVLFFIMLFCLGLSSMFG) form a helical membrane-spanning segment. Over 435–456 (NMEGVVVPLQDLNITPKKWPKE) the chain is Cytoplasmic. The chain crosses the membrane as a helical span at residues 457 to 477 (LLTGLICLGTYLIAFIFTLNS). The Extracellular segment spans residues 478–487 (GQYWLSLLDS). Residues 488–508 (FAGSIPLLIIAFCEMFAVVYV) traverse the membrane as a helical segment. Over 509–531 (YGVDRFNKDIEFMIGHKPNIFWQ) the chain is Cytoplasmic. Residues 532 to 552 (VTWRVVSPLIMLVIFLFFFVI) form a helical membrane-spanning segment. Residues 553–581 (EVNKTLMYSIWDPNYEEFPKSQKIPYPNW) lie on the Extracellular side of the membrane. N555 carries N-linked (GlcNAc...) asparagine glycosylation. Residues 582–602 (VYAVVVTVAGVPCLSIPCFAI) traverse the membrane as a helical segment. Residues 603 to 634 (YKFIRNCCQKSDDHHGLVNTLSTASVNGDLKN) lie on the Cytoplasmic side of the membrane. Residue S627 is modified to Phosphoserine.

This sequence belongs to the sodium:neurotransmitter symporter (SNF) (TC 2.A.22) family. SLC6A19 subfamily. Interacts in a tissue-specific manner with ACE2 in small intestine and with CLTRN in the kidney. Interacts with CLTRN; this interaction is required for trafficking of SLC6A19 to the plasma membrane and for its catalytic activation in kidneys. Interacts with ACE2; this interaction is required for trafficking of SLC6A19 to the plasma membrane and for its catalytic activation in intestine. Interacts with ANPEP; the interaction positively regulates its amino acid transporter activity. Predominantly expressed in kidney and small intestine (at protein level). Expressed in the intestinal brush border (at protein level). Expression not observed in other organs, such as lung, skeletal muscle, brain, liver and pancreas. In kidney, expression is localized in the renal cortex but not in the medulla. Substantial amounts of expression in the proximal tubules. The distal nephron segments and the glomeruli are consistently negative. In the small intestine, expression is exclusively localized in villus enterocytes. High resolution of the hybridization-positive villi reveals a gradient of expression with the highest levels in apical cells. Not detected in crypt cells or in any other cell types of the small intestine.

It is found in the cell membrane. It catalyses the reaction L-alanine(in) + Na(+)(in) = L-alanine(out) + Na(+)(out). The enzyme catalyses L-cysteine(in) + Na(+)(in) = L-cysteine(out) + Na(+)(out). The catalysed reaction is L-glutamine(in) + Na(+)(in) = L-glutamine(out) + Na(+)(out). It carries out the reaction glycine(in) + Na(+)(in) = glycine(out) + Na(+)(out). It catalyses the reaction L-isoleucine(in) + Na(+)(in) = L-isoleucine(out) + Na(+)(out). The enzyme catalyses L-leucine(in) + Na(+)(in) = L-leucine(out) + Na(+)(out). The catalysed reaction is L-methionine(in) + Na(+)(in) = L-methionine(out) + Na(+)(out). It carries out the reaction L-phenylalanine(in) + Na(+)(in) = L-phenylalanine(out) + Na(+)(out). It catalyses the reaction L-serine(in) + Na(+)(in) = L-serine(out) + Na(+)(out). The enzyme catalyses L-tryptophan(in) + Na(+)(in) = L-tryptophan(out) + Na(+)(out). The catalysed reaction is L-tyrosine(in) + Na(+)(in) = L-tyrosine(out) + Na(+)(out). It carries out the reaction L-valine(in) + Na(+)(in) = L-valine(out) + Na(+)(out). In terms of biological role, transporter that mediates resorption of neutral amino acids across the apical membrane of renal and intestinal epithelial cells. This uptake is sodium-dependent and chloride-independent. Requires CLTRN in kidney or ACE2 in intestine for cell surface expression and amino acid transporter activity. This is Sodium-dependent neutral amino acid transporter B(0)AT1 (Slc6a19) from Mus musculus (Mouse).